The primary structure comprises 321 residues: Lipoyl synthase (321 aa).

Residues Cys-68, Cys-73, Cys-79, Cys-94, Cys-98, Cys-101, and Ser-308 each contribute to the [4Fe-4S] cluster site. In terms of domain architecture, Radical SAM core spans 80-297 (FNHGTATFMI…KAEALAMGFT (218 aa)).

Belongs to the radical SAM superfamily. Lipoyl synthase family. Requires [4Fe-4S] cluster as cofactor.

The protein localises to the cytoplasm. The enzyme catalyses [[Fe-S] cluster scaffold protein carrying a second [4Fe-4S](2+) cluster] + N(6)-octanoyl-L-lysyl-[protein] + 2 oxidized [2Fe-2S]-[ferredoxin] + 2 S-adenosyl-L-methionine + 4 H(+) = [[Fe-S] cluster scaffold protein] + N(6)-[(R)-dihydrolipoyl]-L-lysyl-[protein] + 4 Fe(3+) + 2 hydrogen sulfide + 2 5'-deoxyadenosine + 2 L-methionine + 2 reduced [2Fe-2S]-[ferredoxin]. The protein operates within protein modification; protein lipoylation via endogenous pathway; protein N(6)-(lipoyl)lysine from octanoyl-[acyl-carrier-protein]: step 2/2. Catalyzes the radical-mediated insertion of two sulfur atoms into the C-6 and C-8 positions of the octanoyl moiety bound to the lipoyl domains of lipoate-dependent enzymes, thereby converting the octanoylated domains into lipoylated derivatives. This Escherichia fergusonii (strain ATCC 35469 / DSM 13698 / CCUG 18766 / IAM 14443 / JCM 21226 / LMG 7866 / NBRC 102419 / NCTC 12128 / CDC 0568-73) protein is Lipoyl synthase.